The sequence spans 612 residues: Sulfite reductase [NADPH] hemoprotein beta-component (612 aa).

The tract at residues M1 to R32 is disordered. Residues C469, C475, C514, and C518 each contribute to the [4Fe-4S] cluster site. C518 is a siroheme binding site.

It belongs to the nitrite and sulfite reductase 4Fe-4S domain family. As to quaternary structure, alpha(8)-beta(8). The alpha component is a flavoprotein, the beta component is a hemoprotein. Siroheme is required as a cofactor. It depends on [4Fe-4S] cluster as a cofactor.

The catalysed reaction is hydrogen sulfide + 3 NADP(+) + 3 H2O = sulfite + 3 NADPH + 4 H(+). Its pathway is sulfur metabolism; hydrogen sulfide biosynthesis; hydrogen sulfide from sulfite (NADPH route): step 1/1. Its function is as follows. Component of the sulfite reductase complex that catalyzes the 6-electron reduction of sulfite to sulfide. This is one of several activities required for the biosynthesis of L-cysteine from sulfate. The chain is Sulfite reductase [NADPH] hemoprotein beta-component from Methylorubrum populi (strain ATCC BAA-705 / NCIMB 13946 / BJ001) (Methylobacterium populi).